Reading from the N-terminus, the 497-residue chain is Actin-binding protein WASF2 (497 aa).

Disordered stretches follow at residues 173–203 (KEKR…KEEW) and 239–436 (ENVD…SDAR). Positions 252 to 263 (SDSASSPSPSFS) are enriched in low complexity. 2 stretches are compositionally biased toward pro residues: residues 298–335 (SHPP…PPLP) and 343–403 (GTPP…PPLP). Positions 435–452 (ARSDLLSAIRQGFQLRRV) constitute a WH2 domain. A Phosphoserine modification is found at S473.

The protein belongs to the SCAR/WAVE family. In terms of assembly, binds actin and the Arp2/3 complex. Interacts with BAIAP2. Component of the WAVE2 complex composed of ABI1, CYFIP1/SRA1, NCKAP1/NAP1 (NCKAP1l/HEM1 in hematopoietic cells) and WASF2/WAVE2. Directly interacts with BRK1. Interacts with human cytomegalovirus protein UL135. Interacts with FNBP1L (via the SH3 domain).

It localises to the cytoplasm. The protein resides in the cytoskeleton. The protein localises to the cell projection. It is found in the lamellipodium. Its subcellular location is the basolateral cell membrane. Its function is as follows. Downstream effector molecule involved in the transmission of signals from tyrosine kinase receptors and small GTPases to the actin cytoskeleton. Promotes formation of actin filaments. Part of the WAVE complex that regulates lamellipodia formation. The WAVE complex regulates actin filament reorganization via its interaction with the Arp2/3 complex. This Mus musculus (Mouse) protein is Actin-binding protein WASF2.